Reading from the N-terminus, the 130-residue chain is Lysozyme C (130 aa).

The 130-residue stretch at 1 to 130 folds into the C-type lysozyme domain; it reads KVWERCALAR…VEQYVEGCDL (130 aa). 4 cysteine pairs are disulfide-bonded: Cys6–Cys128, Cys30–Cys116, Cys65–Cys81, and Cys77–Cys95. Active-site residues include Glu35 and Asp53.

It belongs to the glycosyl hydrolase 22 family. As to quaternary structure, monomer.

It carries out the reaction Hydrolysis of (1-&gt;4)-beta-linkages between N-acetylmuramic acid and N-acetyl-D-glucosamine residues in a peptidoglycan and between N-acetyl-D-glucosamine residues in chitodextrins.. Lysozymes have primarily a bacteriolytic function; those in tissues and body fluids are associated with the monocyte-macrophage system and enhance the activity of immunoagents. This chain is Lysozyme C (LYZ), found in Camelus dromedarius (Dromedary).